Consider the following 339-residue polypeptide: Fructose-1,6-bisphosphatase, cytosolic (339 aa).

E70, E99, D120, L122, and D123 together coordinate Mg(2+). Substrate is bound by residues 123–126 (DGSS), N214, Y246, Y266, and K276. A Mg(2+)-binding site is contributed by E282.

This sequence belongs to the FBPase class 1 family. Mg(2+) serves as cofactor.

The protein localises to the cytoplasm. The enzyme catalyses beta-D-fructose 1,6-bisphosphate + H2O = beta-D-fructose 6-phosphate + phosphate. The protein is Fructose-1,6-bisphosphatase, cytosolic of Brassica napus (Rape).